We begin with the raw amino-acid sequence, 1265 residues long: Protein FAM193A (1265 aa).

Residues 107 to 142 (SEDTYSTLLQRYQRSEEELRRVAEEWLECQKRIDAY) are a coiled coil. Residues 247-272 (APDYLAERSPPSVSSASSGSGSSSPI) are disordered. Residues 255-271 (SPPSVSSASSGSGSSSP) are compositionally biased toward low complexity. A Phosphoserine modification is found at Ser293. 7 disordered regions span residues 331–407 (NGGG…EQAP), 553–586 (GSEI…SKEK), 626–674 (VQSS…APLP), 750–785 (ENGV…NQKE), 822–841 (LTKR…ERES), 859–881 (ETKP…KLEE), and 893–1163 (EHLH…DRVN). The segment covering 355 to 365 (EADDEEADGES) has biased composition (acidic residues). Residue Ser383 is modified to Phosphoserine. The residue at position 642 (Ser642) is a Phosphoserine. Over residues 757-769 (QQDDGDESADEDS) the composition is skewed to acidic residues. The span at 772–781 (EHSSSTSTST) shows a compositional bias: low complexity. Basic residues predominate over residues 868–877 (AAKRARHKQR). Positions 873 to 932 (RHKQRKLEEKARLEAEARAREHLHLQEEQRRREEEEDEEEEEDRFKEEFQRLQELQKLRA) form a coiled coil. 2 stretches are compositionally biased toward basic and acidic residues: residues 893–905 (EHLH…RRRE) and 915–929 (DRFK…ELQK). Positions 931-940 (RAVKKKKKER) are enriched in basic residues. The span at 953–973 (RNFQAATESVPNSGNIHNGSL) shows a compositional bias: polar residues. Residues 1093-1118 (TEQKREERKVNSNNNNKKQLNHIKDE) are a coiled coil. Ser1129 and Ser1144 each carry phosphoserine. Over residues 1149–1159 (GKNKKNKKKKG) the composition is skewed to basic residues.

The protein belongs to the FAM193 family.

The protein is Protein FAM193A (FAM193A) of Homo sapiens (Human).